The sequence spans 262 residues: tRNA pseudouridine synthase A (262 aa).

The Nucleophile role is filled by Asp-52. Tyr-103 is a binding site for substrate.

Belongs to the tRNA pseudouridine synthase TruA family.

The enzyme catalyses uridine(38/39/40) in tRNA = pseudouridine(38/39/40) in tRNA. Formation of pseudouridine at positions 38, 39 and 40 in the anticodon stem and loop of transfer RNAs. The polypeptide is tRNA pseudouridine synthase A (Methanococcus maripaludis (strain DSM 14266 / JCM 13030 / NBRC 101832 / S2 / LL)).